The following is a 76-amino-acid chain: Large ribosomal subunit protein bL31 (76 aa).

It belongs to the bacterial ribosomal protein bL31 family. Type A subfamily. As to quaternary structure, part of the 50S ribosomal subunit.

Binds the 23S rRNA. In Beijerinckia indica subsp. indica (strain ATCC 9039 / DSM 1715 / NCIMB 8712), this protein is Large ribosomal subunit protein bL31.